We begin with the raw amino-acid sequence, 63 residues long: Large ribosomal subunit protein uL30 (63 aa).

This sequence belongs to the universal ribosomal protein uL30 family. Part of the 50S ribosomal subunit.

The polypeptide is Large ribosomal subunit protein uL30 (Rickettsia massiliae (strain Mtu5)).